Consider the following 224-residue polypeptide: Uracil-DNA glycosylase 2 (224 aa).

Asp64 serves as the catalytic Proton acceptor.

It belongs to the uracil-DNA glycosylase (UDG) superfamily. UNG family.

It is found in the cytoplasm. The enzyme catalyses Hydrolyzes single-stranded DNA or mismatched double-stranded DNA and polynucleotides, releasing free uracil.. Functionally, excises uracil residues from the DNA which can arise as a result of misincorporation of dUMP residues by DNA polymerase or due to deamination of cytosine. This is Uracil-DNA glycosylase 2 from Listeria monocytogenes serovar 1/2a (strain ATCC BAA-679 / EGD-e).